The sequence spans 264 residues: GTP cyclohydrolase FolE2 (264 aa).

The protein belongs to the GTP cyclohydrolase IV family.

It catalyses the reaction GTP + H2O = 7,8-dihydroneopterin 3'-triphosphate + formate + H(+). Its pathway is cofactor biosynthesis; 7,8-dihydroneopterin triphosphate biosynthesis; 7,8-dihydroneopterin triphosphate from GTP: step 1/1. In terms of biological role, converts GTP to 7,8-dihydroneopterin triphosphate. This Vesicomyosocius okutanii subsp. Calyptogena okutanii (strain HA) protein is GTP cyclohydrolase FolE2.